We begin with the raw amino-acid sequence, 825 residues long: Glycerol-3-phosphate acyltransferase (825 aa).

An HXXXXD motif motif is present at residues 306–311 (CHRSHM). The interval 802-825 (SASSSTEMEASTSSSQTAEETTQG) is disordered.

It belongs to the GPAT/DAPAT family.

The protein localises to the cell inner membrane. The catalysed reaction is sn-glycerol 3-phosphate + an acyl-CoA = a 1-acyl-sn-glycero-3-phosphate + CoA. Its pathway is phospholipid metabolism; CDP-diacylglycerol biosynthesis; CDP-diacylglycerol from sn-glycerol 3-phosphate: step 1/3. The protein is Glycerol-3-phosphate acyltransferase of Pectobacterium atrosepticum (strain SCRI 1043 / ATCC BAA-672) (Erwinia carotovora subsp. atroseptica).